The primary structure comprises 86 residues: Electron transfer flavoprotein regulatory factor 1 (86 aa).

Belongs to the complex I LYR family. Homotetramer. Interacts with NDUFAB1. Interacts with ETFA. Interacts with ETFB.

It is found in the mitochondrion. Acts as a regulator of the electron transfer flavoprotein by promoting the removal of flavin from the ETF holoenzyme (composed of ETFA and ETFB). This is Electron transfer flavoprotein regulatory factor 1 from Mus musculus (Mouse).